The following is a 247-amino-acid chain: NAD-dependent protein deacetylase 2 (247 aa).

The region spanning 1–247 (MDQIRQLAQW…ASVRKQIQAE (247 aa)) is the Deacetylase sirtuin-type domain. NAD(+)-binding residues include A23, T27, F34, R35, Q103, I105, D106, and H121. Position 34 (F34) interacts with nicotinamide. I105 and D106 together coordinate nicotinamide. The Proton acceptor role is filled by H121. Positions 129, 132, 149, and 152 each coordinate Zn(2+). Residues T188, S189, N215, and I233 each coordinate NAD(+).

This sequence belongs to the sirtuin family. Class U subfamily. The cofactor is Zn(2+).

Its subcellular location is the cytoplasm. The catalysed reaction is N(6)-acetyl-L-lysyl-[protein] + NAD(+) + H2O = 2''-O-acetyl-ADP-D-ribose + nicotinamide + L-lysyl-[protein]. Functionally, NAD-dependent protein deacetylase which modulates the activities of several enzymes which are inactive in their acetylated form. The sequence is that of NAD-dependent protein deacetylase 2 from Geobacillus kaustophilus (strain HTA426).